The following is a 138-amino-acid chain: Ostreolysin A6 (138 aa).

It belongs to the aegerolysin family. Monomer.

In terms of biological role, has hemolytic activity against bovine erythrocytes at nanomolar concentrations in vitro. Promotes active pleurotolysin B (PlyB)-dependent permeabilization of membranes rich in cholesterol and sphingomyelin. May play an important role in the initial phase of fungal fruiting. The polypeptide is Ostreolysin A6 (OlyA6) (Pleurotus ostreatus (Oyster mushroom)).